The chain runs to 153 residues: 4'-phosphopantetheinyl transferase B, mitochondrial (153 aa).

The protein belongs to the P-Pant transferase superfamily.

It is found in the mitochondrion. It carries out the reaction apo-[ACP] + CoA = holo-[ACP] + adenosine 3',5'-bisphosphate + H(+). In terms of biological role, acyl-carrier-protein synthase transfers the 4'-phosphopantetheine moiety from coenzyme A to a Ser of an acyl-carrier-protein. The 4'-phosphopantetheine (4'-PPT) portion of CoA provides the essential prosthetic group for a number of carrier proteins and multi-domain enzymes, priming them for the acceptance of acyl building blocks in fatty acid synthesis and many aspects of secondary metabolism mediated by polyketide synthases (PKSs) and non-ribosomal peptide synthetases (NRPSs). PptB is specific for the mitochondrial acyl carrier protein acpA. The protein is 4'-phosphopantetheinyl transferase B, mitochondrial of Aspergillus fumigatus (strain ATCC MYA-4609 / CBS 101355 / FGSC A1100 / Af293) (Neosartorya fumigata).